The following is a 471-amino-acid chain: Chromosomal replication initiator protein DnaA (471 aa).

The segment at 1 to 91 (MVDVSETTER…KYWQDESDAV (91 aa)) is domain I, interacts with DnaA modulators. Residues 91–133 (VYSVDICVSDGVGVQPQMAEHPDGAVDGPPVVMVGGTYDHLSS) are domain II. A domain III, AAA+ region region spans residues 134 to 352 (PLDPRFTFDN…GALNKVVAHS (219 aa)). Positions 180, 182, 183, and 184 each coordinate ATP. Residues 353–471 (SLVGRSVTIE…DINLLIRMLR (119 aa)) are domain IV, binds dsDNA.

This sequence belongs to the DnaA family. Oligomerizes as a right-handed, spiral filament on DNA at oriC.

It localises to the cytoplasm. In terms of biological role, plays an essential role in the initiation and regulation of chromosomal replication. ATP-DnaA binds to the origin of replication (oriC) to initiate formation of the DNA replication initiation complex once per cell cycle. Binds the DnaA box (a 9 base pair repeat at the origin) and separates the double-stranded (ds)DNA. Forms a right-handed helical filament on oriC DNA; dsDNA binds to the exterior of the filament while single-stranded (ss)DNA is stabiized in the filament's interior. The ATP-DnaA-oriC complex binds and stabilizes one strand of the AT-rich DNA unwinding element (DUE), permitting loading of DNA polymerase. After initiation quickly degrades to an ADP-DnaA complex that is not apt for DNA replication. Binds acidic phospholipids. The polypeptide is Chromosomal replication initiator protein DnaA (Anaplasma marginale (strain St. Maries)).